Consider the following 119-residue polypeptide: uncharacterized protein (119 aa).

The disordered stretch occupies residues 1–20; the sequence is MPHLAAEAHTWPPHISHSTL. The chain crosses the membrane as a helical span at residues 74-94; it reads LLFVVHQGHIGTGLIVFIICW.

The protein localises to the membrane. This is an uncharacterized protein from Saccharomyces cerevisiae (strain ATCC 204508 / S288c) (Baker's yeast).